The chain runs to 434 residues: Rubisco accumulation factor 1.1, chloroplastic (434 aa).

A chloroplast-targeting transit peptide spans Met1 to Lys51. Residues Ile65–Leu254 form an N-terminal alpha-helix region. Residues Val273–Pro419 are C-terminal beta sheet.

The protein belongs to the RAF family. In terms of assembly, homodimer.

The protein localises to the plastid. It localises to the chloroplast. In terms of biological role, required for assembly or stability of RuBisCO. Acts at a postchaperonin step to fold and/or assemble the large subunit (rbcL) into RuBisCO. RAF1 binds first to a rbcL dimer (rbcL(2)), leading to a rbcL(8)-RAF1(4) complex formation. In the next step, RBCS displaces RAF1, thus resulting in holoenzyme formation. The chain is Rubisco accumulation factor 1.1, chloroplastic from Arabidopsis thaliana (Mouse-ear cress).